The primary structure comprises 320 residues: o-succinylbenzoate synthase (320 aa).

Residue Lys133 is the Proton donor of the active site. Mg(2+) is bound by residues Asp161, Glu190, and Asp213. Lys235 serves as the catalytic Proton acceptor.

Belongs to the mandelate racemase/muconate lactonizing enzyme family. MenC type 1 subfamily. A divalent metal cation is required as a cofactor.

It catalyses the reaction (1R,6R)-6-hydroxy-2-succinyl-cyclohexa-2,4-diene-1-carboxylate = 2-succinylbenzoate + H2O. It participates in quinol/quinone metabolism; 1,4-dihydroxy-2-naphthoate biosynthesis; 1,4-dihydroxy-2-naphthoate from chorismate: step 4/7. The protein operates within quinol/quinone metabolism; menaquinone biosynthesis. Functionally, converts 2-succinyl-6-hydroxy-2,4-cyclohexadiene-1-carboxylate (SHCHC) to 2-succinylbenzoate (OSB). The sequence is that of o-succinylbenzoate synthase from Salmonella paratyphi A (strain ATCC 9150 / SARB42).